Reading from the N-terminus, the 149-residue chain is Transcriptional repressor NrdR (149 aa).

A zinc finger spans residues 3–34 (CPFCATDDTKVVDSRLTADGYQIRRRRECPVC). The 91-residue stretch at 49 to 139 (PHIVKNNGSR…VYLSFDDVEE (91 aa)) folds into the ATP-cone domain.

It belongs to the NrdR family. Zn(2+) serves as cofactor.

In terms of biological role, negatively regulates transcription of bacterial ribonucleotide reductase nrd genes and operons by binding to NrdR-boxes. In Glaesserella parasuis serovar 5 (strain SH0165) (Haemophilus parasuis), this protein is Transcriptional repressor NrdR.